The chain runs to 453 residues: Probable phenylalanine--tRNA ligase, mitochondrial (453 aa).

The N-terminal 27 residues, methionine 1 to alanine 27, are a transit peptide targeting the mitochondrion. Substrate contacts are provided by residues threonine 142–glutamine 145, arginine 164, threonine 171–tyrosine 173, glutamine 178–aspartate 180, glutamate 285, and phenylalanine 310. Residues serine 356 to arginine 453 enclose the FDX-ACB domain.

The protein belongs to the class-II aminoacyl-tRNA synthetase family.

The protein resides in the mitochondrion matrix. The catalysed reaction is tRNA(Phe) + L-phenylalanine + ATP = L-phenylalanyl-tRNA(Phe) + AMP + diphosphate + H(+). Is responsible for the charging of tRNA(Phe) with phenylalanine in mitochondrial translation. This chain is Probable phenylalanine--tRNA ligase, mitochondrial, found in Drosophila melanogaster (Fruit fly).